A 185-amino-acid chain; its full sequence is Ribosome-recycling factor (185 aa).

The protein belongs to the RRF family.

Its subcellular location is the cytoplasm. Responsible for the release of ribosomes from messenger RNA at the termination of protein biosynthesis. May increase the efficiency of translation by recycling ribosomes from one round of translation to another. This is Ribosome-recycling factor from Clostridium botulinum (strain Eklund 17B / Type B).